Here is a 394-residue protein sequence, read N- to C-terminus: L-lactate dehydrogenase (394 aa).

The FMN hydroxy acid dehydrogenase domain maps to 1–380 (MIISAASDYR…SRDSLVQNAE (380 aa)). Tyr-24 contributes to the substrate binding site. The FMN site is built by Ser-106 and Gln-127. Tyr-129 contacts substrate. Residue Thr-155 coordinates FMN. Substrate is bound at residue Arg-164. An FMN-binding site is contributed by Lys-251. His-275 serves as the catalytic Proton acceptor. A substrate-binding site is contributed by Arg-278. 306–330 (DSGIRNGLDVVRMIALGADSVLLGR) contacts FMN.

It belongs to the FMN-dependent alpha-hydroxy acid dehydrogenase family. The cofactor is FMN.

It localises to the cell inner membrane. The catalysed reaction is (S)-lactate + A = pyruvate + AH2. In terms of biological role, catalyzes the conversion of L-lactate to pyruvate. Is coupled to the respiratory chain. This chain is L-lactate dehydrogenase, found in Klebsiella pneumoniae subsp. pneumoniae (strain ATCC 700721 / MGH 78578).